The chain runs to 414 residues: Probable peptidoglycan glycosyltransferase FtsW (414 aa).

The Cytoplasmic portion of the chain corresponds to 1–12 (MRLSLPRLKMPR). A helical membrane pass occupies residues 13–33 (LPGFSILVWISTALKGWVMGS). The Periplasmic portion of the chain corresponds to 34 to 47 (REKDTDSLIMYDRT). The helical transmembrane segment at 48 to 68 (LLWLTFGLAAIGFIMVTSASM) threads the bilayer. At 69–86 (PIGQRLTNDPFFFAKRDG) the chain is on the cytoplasmic side. The chain crosses the membrane as a helical span at residues 87-107 (VYLILAFILAIITLRLPMEFW). Residues 108 to 111 (QRYS) lie on the Periplasmic side of the membrane. The chain crosses the membrane as a helical span at residues 112–132 (ATMLLGSIILLMIVLVVGSSV). Over 133–174 (KGASRWIDLGLLRIQPAELTKLSLFCYIANYLVRKGDEVRNN) the chain is Cytoplasmic. Residues 175–194 (LRGFLKPMGVILVLAVLLLA) traverse the membrane as a helical segment. Topologically, residues 195–197 (QPD) are periplasmic. Residues 198–217 (LGTVVVLFVTTLAMLFLAGA) form a helical membrane-spanning segment. Residue Lys-218 is a topological domain, cytoplasmic. Residues 219 to 239 (LWQFIAIIGMGISAVVLLILA) traverse the membrane as a helical segment. Topologically, residues 240 to 301 (EPYRIRRVTA…PEAHTDFIFA (62 aa)) are periplasmic. The helical transmembrane segment at 302 to 322 (IIGEELGYVGVVLALLMVFFV) threads the bilayer. Residues 323–342 (AFRAMSIGRKALEIDHRFSG) are Cytoplasmic-facing. The chain crosses the membrane as a helical span at residues 343–363 (FLACSIGIWFSFQALVNVGAA). Topologically, residues 364–373 (AGMLPTKGLT) are periplasmic. A helical transmembrane segment spans residues 374–394 (LPLISYGGSSLLIMSTAIMML). The Cytoplasmic segment spans residues 395-414 (LRIDYETRLEKAQAFVRGSR).

Belongs to the SEDS family. FtsW subfamily.

Its subcellular location is the cell inner membrane. It catalyses the reaction [GlcNAc-(1-&gt;4)-Mur2Ac(oyl-L-Ala-gamma-D-Glu-L-Lys-D-Ala-D-Ala)](n)-di-trans,octa-cis-undecaprenyl diphosphate + beta-D-GlcNAc-(1-&gt;4)-Mur2Ac(oyl-L-Ala-gamma-D-Glu-L-Lys-D-Ala-D-Ala)-di-trans,octa-cis-undecaprenyl diphosphate = [GlcNAc-(1-&gt;4)-Mur2Ac(oyl-L-Ala-gamma-D-Glu-L-Lys-D-Ala-D-Ala)](n+1)-di-trans,octa-cis-undecaprenyl diphosphate + di-trans,octa-cis-undecaprenyl diphosphate + H(+). It functions in the pathway cell wall biogenesis; peptidoglycan biosynthesis. Peptidoglycan polymerase that is essential for cell division. This Escherichia coli O157:H7 protein is Probable peptidoglycan glycosyltransferase FtsW.